We begin with the raw amino-acid sequence, 187 residues long: Inner membrane-spanning protein YciB (187 aa).

5 helical membrane passes run 22–42, 50–70, 80–100, 118–138, and 148–168; these read IYVATGALIVATAVQLIVTYA, MQLITFVIVTIFGSMTIFFHD, IIYVVLAVGLTASHLMGKSVV, INWAWVGFFSFFAGLNIYIAY, and FKVFGMLIATFAYMIATGVYI.

This sequence belongs to the YciB family.

It localises to the cell inner membrane. In terms of biological role, plays a role in cell envelope biogenesis, maintenance of cell envelope integrity and membrane homeostasis. The protein is Inner membrane-spanning protein YciB of Vibrio parahaemolyticus serotype O3:K6 (strain RIMD 2210633).